Reading from the N-terminus, the 107-residue chain is Heme-degrading monooxygenase (107 aa).

In terms of domain architecture, ABM spans 2-94 (IIVTNTAKIT…YILDNKIAYY (93 aa)). Asparagine 6 contributes to the Fe cation binding site. A heme-binding site is contributed by histidine 76.

The protein belongs to the antibiotic biosynthesis monooxygenase family. Heme-degrading monooxygenase IsdG subfamily. In terms of assembly, homodimer.

It is found in the cytoplasm. The enzyme catalyses heme b + 3 reduced [NADPH--hemoprotein reductase] + 3 O2 = biliverdin IXalpha + CO + Fe(2+) + 3 oxidized [NADPH--hemoprotein reductase] + 3 H2O + H(+). In terms of biological role, allows bacterial pathogens to use the host heme as an iron source. Catalyzes the oxidative degradation of the heme macrocyclic porphyrin ring to the biliverdin in the presence of a suitable electron donor such as ascorbate or NADPH--cytochrome P450 reductase, with subsequent release of free iron. The sequence is that of Heme-degrading monooxygenase from Bacillus cereus (strain ATCC 14579 / DSM 31 / CCUG 7414 / JCM 2152 / NBRC 15305 / NCIMB 9373 / NCTC 2599 / NRRL B-3711).